The primary structure comprises 288 residues: Probable ketoamine kinase VV1_2562 (288 aa).

92–94 (NFL) lines the ATP pocket. D195 serves as the catalytic Proton acceptor.

The protein belongs to the fructosamine kinase family.

In terms of biological role, ketoamine kinase that phosphorylates ketoamines on the third carbon of the sugar moiety to generate ketoamine 3-phosphate. The sequence is that of Probable ketoamine kinase VV1_2562 from Vibrio vulnificus (strain CMCP6).